The chain runs to 245 residues: Probable 2-phosphosulfolactate phosphatase (245 aa).

It belongs to the ComB family. The cofactor is Mg(2+).

The enzyme catalyses (2R)-O-phospho-3-sulfolactate + H2O = (2R)-3-sulfolactate + phosphate. This is Probable 2-phosphosulfolactate phosphatase from Synechococcus sp. (strain RCC307).